Consider the following 78-residue polypeptide: MLVLSRKLGEGIVIGDDIVLKIVEIKGGTIRIGIDAPLDKKIYRQEVYQRIIAENQEASQWSIDDLDAISSLISPQPK.

This sequence belongs to the CsrA/RsmA family. As to quaternary structure, homodimer; the beta-strands of each monomer intercalate to form a hydrophobic core, while the alpha-helices form wings that extend away from the core.

The protein localises to the cytoplasm. Its function is as follows. A translational regulator that binds mRNA to regulate translation initiation and/or mRNA stability. Usually binds in the 5'-UTR at or near the Shine-Dalgarno sequence preventing ribosome-binding, thus repressing translation. Its main target seems to be the major flagellin gene, while its function is anatagonized by FliW. The sequence is that of Translational regulator CsrA from Desulfotalea psychrophila (strain LSv54 / DSM 12343).